Here is a 712-residue protein sequence, read N- to C-terminus: 1,4-alpha-glucan branching enzyme GlgB (712 aa).

Residue D397 is the Nucleophile of the active site. The Proton donor role is filled by E450.

This sequence belongs to the glycosyl hydrolase 13 family. GlgB subfamily. As to quaternary structure, monomer.

The catalysed reaction is Transfers a segment of a (1-&gt;4)-alpha-D-glucan chain to a primary hydroxy group in a similar glucan chain.. The protein operates within glycan biosynthesis; glycogen biosynthesis. Catalyzes the formation of the alpha-1,6-glucosidic linkages in glycogen by scission of a 1,4-alpha-linked oligosaccharide from growing alpha-1,4-glucan chains and the subsequent attachment of the oligosaccharide to the alpha-1,6 position. In Bradyrhizobium sp. (strain BTAi1 / ATCC BAA-1182), this protein is 1,4-alpha-glucan branching enzyme GlgB.